Consider the following 375-residue polypeptide: Succinyl-diaminopimelate desuccinylase (375 aa).

Residue His-66 participates in Zn(2+) binding. Asp-68 is a catalytic residue. Asp-99 contributes to the Zn(2+) binding site. Glu-133 functions as the Proton acceptor in the catalytic mechanism. Glu-134, Glu-162, and His-348 together coordinate Zn(2+).

Belongs to the peptidase M20A family. DapE subfamily. In terms of assembly, homodimer. It depends on Zn(2+) as a cofactor. Co(2+) serves as cofactor.

It catalyses the reaction N-succinyl-(2S,6S)-2,6-diaminopimelate + H2O = (2S,6S)-2,6-diaminopimelate + succinate. It functions in the pathway amino-acid biosynthesis; L-lysine biosynthesis via DAP pathway; LL-2,6-diaminopimelate from (S)-tetrahydrodipicolinate (succinylase route): step 3/3. Its function is as follows. Catalyzes the hydrolysis of N-succinyl-L,L-diaminopimelic acid (SDAP), forming succinate and LL-2,6-diaminopimelate (DAP), an intermediate involved in the bacterial biosynthesis of lysine and meso-diaminopimelic acid, an essential component of bacterial cell walls. This Escherichia coli O6:K15:H31 (strain 536 / UPEC) protein is Succinyl-diaminopimelate desuccinylase.